A 213-amino-acid polypeptide reads, in one-letter code: Ribosomal RNA small subunit methyltransferase G (213 aa).

S-adenosyl-L-methionine is bound by residues Gly-81, Leu-86, 132 to 133 (VE), and Arg-147.

This sequence belongs to the methyltransferase superfamily. RNA methyltransferase RsmG family.

It localises to the cytoplasm. It carries out the reaction guanosine(527) in 16S rRNA + S-adenosyl-L-methionine = N(7)-methylguanosine(527) in 16S rRNA + S-adenosyl-L-homocysteine. Its function is as follows. Specifically methylates the N7 position of guanine in position 527 of 16S rRNA. The sequence is that of Ribosomal RNA small subunit methyltransferase G from Mannheimia succiniciproducens (strain KCTC 0769BP / MBEL55E).